A 338-amino-acid chain; its full sequence is Holliday junction branch migration complex subunit RuvB (338 aa).

Residues 1–180 are large ATPase domain (RuvB-L); sequence MERLLDNKFS…FGIIERLDYY (180 aa). The ATP site is built by L19, R20, G61, K64, T65, T66, R170, Y180, and R217. T65 serves as a coordination point for Mg(2+). A small ATPAse domain (RuvB-S) region spans residues 181–251; it reads TVEELSQIVM…VAKSGLEMFE (71 aa). Residues 254–338 form a head domain (RuvB-H) region; that stretch reads EYGLDLVDRN…FNVKESGDKR (85 aa). K309 and R314 together coordinate DNA.

It belongs to the RuvB family. In terms of assembly, homohexamer. Forms an RuvA(8)-RuvB(12)-Holliday junction (HJ) complex. HJ DNA is sandwiched between 2 RuvA tetramers; dsDNA enters through RuvA and exits via RuvB. An RuvB hexamer assembles on each DNA strand where it exits the tetramer. Each RuvB hexamer is contacted by two RuvA subunits (via domain III) on 2 adjacent RuvB subunits; this complex drives branch migration. In the full resolvosome a probable DNA-RuvA(4)-RuvB(12)-RuvC(2) complex forms which resolves the HJ.

The protein resides in the cytoplasm. The enzyme catalyses ATP + H2O = ADP + phosphate + H(+). In terms of biological role, the RuvA-RuvB-RuvC complex processes Holliday junction (HJ) DNA during genetic recombination and DNA repair, while the RuvA-RuvB complex plays an important role in the rescue of blocked DNA replication forks via replication fork reversal (RFR). RuvA specifically binds to HJ cruciform DNA, conferring on it an open structure. The RuvB hexamer acts as an ATP-dependent pump, pulling dsDNA into and through the RuvAB complex. RuvB forms 2 homohexamers on either side of HJ DNA bound by 1 or 2 RuvA tetramers; 4 subunits per hexamer contact DNA at a time. Coordinated motions by a converter formed by DNA-disengaged RuvB subunits stimulates ATP hydrolysis and nucleotide exchange. Immobilization of the converter enables RuvB to convert the ATP-contained energy into a lever motion, pulling 2 nucleotides of DNA out of the RuvA tetramer per ATP hydrolyzed, thus driving DNA branch migration. The RuvB motors rotate together with the DNA substrate, which together with the progressing nucleotide cycle form the mechanistic basis for DNA recombination by continuous HJ branch migration. Branch migration allows RuvC to scan DNA until it finds its consensus sequence, where it cleaves and resolves cruciform DNA. This is Holliday junction branch migration complex subunit RuvB from Caldicellulosiruptor saccharolyticus (strain ATCC 43494 / DSM 8903 / Tp8T 6331).